Consider the following 273-residue polypeptide: Putative pyruvate, phosphate dikinase regulatory protein (273 aa).

149 to 156 (GPSRTSKT) serves as a coordination point for ADP.

The protein belongs to the pyruvate, phosphate/water dikinase regulatory protein family. PDRP subfamily.

The enzyme catalyses N(tele)-phospho-L-histidyl/L-threonyl-[pyruvate, phosphate dikinase] + ADP = N(tele)-phospho-L-histidyl/O-phospho-L-threonyl-[pyruvate, phosphate dikinase] + AMP + H(+). It carries out the reaction N(tele)-phospho-L-histidyl/O-phospho-L-threonyl-[pyruvate, phosphate dikinase] + phosphate + H(+) = N(tele)-phospho-L-histidyl/L-threonyl-[pyruvate, phosphate dikinase] + diphosphate. Bifunctional serine/threonine kinase and phosphorylase involved in the regulation of the pyruvate, phosphate dikinase (PPDK) by catalyzing its phosphorylation/dephosphorylation. The sequence is that of Putative pyruvate, phosphate dikinase regulatory protein from Rickettsia africae (strain ESF-5).